The sequence spans 541 residues: 2-hydroxyacylsphingosine 1-beta-galactosyltransferase (541 aa).

A signal peptide spans 1-20; it reads MKSYTPYFMLLWSAVGIARA. N-linked (GlcNAc...) asparagine glycans are attached at residues asparagine 78, asparagine 333, and asparagine 442. Residues 472–492 form a helical membrane-spanning segment; the sequence is YFLLDIAFVLLLGAVLLYFIL. The segment at 518–541 is disordered; the sequence is HYQNGIRNGKYKGNGRVKHEKKVR. Basic residues predominate over residues 526 to 541; sequence GKYKGNGRVKHEKKVR.

It belongs to the UDP-glycosyltransferase family.

The protein localises to the membrane. It localises to the endoplasmic reticulum. It carries out the reaction an N-acylsphing-4-enine + UDP-alpha-D-galactose = a beta-D-galactosyl-(1&lt;-&gt;1')-N-acylsphing-4-enine + UDP + H(+). It catalyses the reaction N-(2-hydroxy-hexanoyl)-sphing-4-enine + UDP-alpha-D-galactose = N-(2-hydroxy-hexanoyl)-beta-D-galactosyl-sphing-4-enine + UDP + H(+). The enzyme catalyses N-(2-hydroxy-hexanoyl)-sphinganine + UDP-alpha-D-galactose = N-(2-hydroxyhexanoyl)-beta-D-galactosylsphinganine + UDP + H(+). The catalysed reaction is an N-acyl-sphingoid base + UDP-alpha-D-galactose = a D-galactosylceramide + UDP + H(+). Its pathway is sphingolipid metabolism; galactosylceramide biosynthesis. Its function is as follows. Catalyzes the transfer of galactose to ceramide, a key enzymatic step in the biosynthesis of galactocerebrosides, which are abundant sphingolipids of the myelin membrane of the central nervous system and peripheral nervous system. Galactosylates both hydroxy- and non-hydroxy fatty acid-containing ceramides and diglycerides. The polypeptide is 2-hydroxyacylsphingosine 1-beta-galactosyltransferase (Mus musculus (Mouse)).